A 114-amino-acid polypeptide reads, in one-letter code: MSKSYNQRQRKKLHLAEFQELGFLVNFQFAEGTAIETVDETVDRFINEVIQPNGLAYEGSGYLHWEGLVCLEKIGKCDESHRETVKKWLETNGLQQIEVSELFDIWWEYPTKVE.

It to E.coli YggL.

This is an uncharacterized protein from Haemophilus influenzae (strain ATCC 51907 / DSM 11121 / KW20 / Rd).